Consider the following 124-residue polypeptide: Small ribosomal subunit protein uS12cz/uS12cy (124 aa).

Belongs to the universal ribosomal protein uS12 family. As to quaternary structure, part of the 30S ribosomal subunit.

The protein localises to the plastid. In terms of biological role, with S4 and S5 plays an important role in translational accuracy. Located at the interface of the 30S and 50S subunits. The sequence is that of Small ribosomal subunit protein uS12cz/uS12cy (rps12-A) from Epifagus virginiana (Beechdrops).